The primary structure comprises 366 residues: Rab9 effector protein with kelch motifs (366 aa).

6 Kelch repeats span residues 49-95, 100-146, 151-200, 204-253, 254-303, and 343-366; these read KILI…FISA, NIWV…TSSA, KLYV…VLTA, KLFV…AWKS, YIYI…LLPW, and LCFI…TILQ.

In terms of biological role, rab9 effector required for endosome to trans-Golgi network (TGN) transport. In Xenopus laevis (African clawed frog), this protein is Rab9 effector protein with kelch motifs (rabepk).